The following is a 204-amino-acid chain: ATP-dependent Clp protease proteolytic subunit (204 aa).

The active-site Nucleophile is the serine 100. Histidine 125 is an active-site residue.

Belongs to the peptidase S14 family. As to quaternary structure, fourteen ClpP subunits assemble into 2 heptameric rings which stack back to back to give a disk-like structure with a central cavity, resembling the structure of eukaryotic proteasomes.

The protein localises to the cytoplasm. It catalyses the reaction Hydrolysis of proteins to small peptides in the presence of ATP and magnesium. alpha-casein is the usual test substrate. In the absence of ATP, only oligopeptides shorter than five residues are hydrolyzed (such as succinyl-Leu-Tyr-|-NHMec, and Leu-Tyr-Leu-|-Tyr-Trp, in which cleavage of the -Tyr-|-Leu- and -Tyr-|-Trp bonds also occurs).. Functionally, cleaves peptides in various proteins in a process that requires ATP hydrolysis. Has a chymotrypsin-like activity. Plays a major role in the degradation of misfolded proteins. This is ATP-dependent Clp protease proteolytic subunit from Anaeromyxobacter sp. (strain Fw109-5).